The primary structure comprises 132 residues: Putative RNase AF_2433 (132 aa).

Active-site residues include arginine 90 and histidine 95. The short motif at 90–97 is the RX(4)HXY motif element; the sequence is RNWLVHRY. Residue tyrosine 97 is modified to O-di-AMP-tyrosine.

It belongs to the HepT RNase toxin family. Homodimer, probably forms a complex with cognate antitoxin AF_2432. Post-translationally, modified by cognate antitoxin AF_2432; probably at least 2 successive AMPylation events occur on Tyr-97.

Probable toxic component of a putative type VII toxin-antitoxin (TA) system, probably an RNase. Probably neutralized by cognate antitoxin AF_2432. Neutralization may be due to AMPylation by AF_2432. This chain is Putative RNase AF_2433, found in Archaeoglobus fulgidus (strain ATCC 49558 / DSM 4304 / JCM 9628 / NBRC 100126 / VC-16).